A 263-amino-acid polypeptide reads, in one-letter code: L-aspartate dehydrogenase (263 aa).

2 residues coordinate NAD(+): Ala120 and Asn186. His216 is an active-site residue.

The protein belongs to the L-aspartate dehydrogenase family.

The catalysed reaction is L-aspartate + NADP(+) + H2O = oxaloacetate + NH4(+) + NADPH + H(+). The enzyme catalyses L-aspartate + NAD(+) + H2O = oxaloacetate + NH4(+) + NADH + H(+). It functions in the pathway cofactor biosynthesis; NAD(+) biosynthesis; iminoaspartate from L-aspartate (dehydrogenase route): step 1/1. In terms of biological role, specifically catalyzes the NAD or NADP-dependent dehydrogenation of L-aspartate to iminoaspartate. In Acinetobacter baumannii (strain AB307-0294), this protein is L-aspartate dehydrogenase.